Reading from the N-terminus, the 339-residue chain is Flap endonuclease 1 (339 aa).

Residues 1–99 (MGVNLKEIVD…VAWEKRKKHK (99 aa)) are N-domain. Residues aspartate 29, aspartate 81, glutamate 153, glutamate 155, aspartate 174, aspartate 176, and aspartate 237 each contribute to the Mg(2+) site. Residues 117–258 (EAIKYAKSLG…TAIEIVKRFG (142 aa)) form an I-domain region. The interval 329 to 337 (NQKTLFSFF) is interaction with PCNA.

It belongs to the XPG/RAD2 endonuclease family. FEN1 subfamily. Interacts with PCNA. PCNA stimulates the nuclease activity without altering cleavage specificity. Requires Mg(2+) as cofactor.

In terms of biological role, structure-specific nuclease with 5'-flap endonuclease and 5'-3' exonuclease activities involved in DNA replication and repair. During DNA replication, cleaves the 5'-overhanging flap structure that is generated by displacement synthesis when DNA polymerase encounters the 5'-end of a downstream Okazaki fragment. Binds the unpaired 3'-DNA end and kinks the DNA to facilitate 5' cleavage specificity. Cleaves one nucleotide into the double-stranded DNA from the junction in flap DNA, leaving a nick for ligation. Also involved in the base excision repair (BER) pathway. Acts as a genome stabilization factor that prevents flaps from equilibrating into structures that lead to duplications and deletions. Also possesses 5'-3' exonuclease activity on nicked or gapped double-stranded DNA. In Nanoarchaeum equitans (strain Kin4-M), this protein is Flap endonuclease 1.